The sequence spans 494 residues: Aspartyl/glutamyl-tRNA(Asn/Gln) amidotransferase subunit B (494 aa).

Belongs to the GatB/GatE family. GatB subfamily. Heterotrimer of A, B and C subunits.

It catalyses the reaction L-glutamyl-tRNA(Gln) + L-glutamine + ATP + H2O = L-glutaminyl-tRNA(Gln) + L-glutamate + ADP + phosphate + H(+). The enzyme catalyses L-aspartyl-tRNA(Asn) + L-glutamine + ATP + H2O = L-asparaginyl-tRNA(Asn) + L-glutamate + ADP + phosphate + 2 H(+). Allows the formation of correctly charged Asn-tRNA(Asn) or Gln-tRNA(Gln) through the transamidation of misacylated Asp-tRNA(Asn) or Glu-tRNA(Gln) in organisms which lack either or both of asparaginyl-tRNA or glutaminyl-tRNA synthetases. The reaction takes place in the presence of glutamine and ATP through an activated phospho-Asp-tRNA(Asn) or phospho-Glu-tRNA(Gln). This Synechococcus sp. (strain WH7803) protein is Aspartyl/glutamyl-tRNA(Asn/Gln) amidotransferase subunit B.